A 275-amino-acid polypeptide reads, in one-letter code: NH(3)-dependent NAD(+) synthetase (275 aa).

Position 46–53 (46–53 (GISGGQDS)) interacts with ATP. Residue Asp52 coordinates Mg(2+). Residue Arg140 coordinates deamido-NAD(+). Thr160 contributes to the ATP binding site. Position 165 (Glu165) interacts with Mg(2+). Residues Lys173 and Asp180 each contribute to the deamido-NAD(+) site. The ATP site is built by Lys189 and Thr211. Position 260–261 (260–261 (HK)) interacts with deamido-NAD(+).

Belongs to the NAD synthetase family. In terms of assembly, homodimer.

The enzyme catalyses deamido-NAD(+) + NH4(+) + ATP = AMP + diphosphate + NAD(+) + H(+). The protein operates within cofactor biosynthesis; NAD(+) biosynthesis; NAD(+) from deamido-NAD(+) (ammonia route): step 1/1. Catalyzes the ATP-dependent amidation of deamido-NAD to form NAD. Uses ammonia as a nitrogen source. This Escherichia coli O127:H6 (strain E2348/69 / EPEC) protein is NH(3)-dependent NAD(+) synthetase.